A 291-amino-acid polypeptide reads, in one-letter code: ATP synthase gamma chain (291 aa).

This sequence belongs to the ATPase gamma chain family. As to quaternary structure, F-type ATPases have 2 components, CF(1) - the catalytic core - and CF(0) - the membrane proton channel. CF(1) has five subunits: alpha(3), beta(3), gamma(1), delta(1), epsilon(1). CF(0) has three main subunits: a, b and c.

It localises to the cell inner membrane. Functionally, produces ATP from ADP in the presence of a proton gradient across the membrane. The gamma chain is believed to be important in regulating ATPase activity and the flow of protons through the CF(0) complex. The protein is ATP synthase gamma chain of Ruegeria pomeroyi (strain ATCC 700808 / DSM 15171 / DSS-3) (Silicibacter pomeroyi).